Here is a 752-residue protein sequence, read N- to C-terminus: Conserved oligomeric Golgi complex subunit 6 (752 aa).

Disordered stretches follow at residues methionine 1–alanine 36, serine 601–glutamine 620, and valine 702–leucine 736. The span at alanine 9–proline 25 shows a compositional bias: low complexity. Residues serine 601–proline 619 are compositionally biased toward polar residues. Residues valine 702–aspartate 721 are compositionally biased toward basic and acidic residues.

It belongs to the COG6 family.

It localises to the golgi apparatus membrane. In terms of biological role, acts as a component of the peripheral membrane COG complex that is involved in intra-Golgi protein trafficking. COG is located at the cis-Golgi, and regulates tethering of retrograde intra-Golgi vesicles and possibly a number of other membrane trafficking events. The sequence is that of Conserved oligomeric Golgi complex subunit 6 (cog6) from Aspergillus terreus (strain NIH 2624 / FGSC A1156).